The chain runs to 365 residues: Red-sensitive opsin (365 aa).

The Extracellular portion of the chain corresponds to 1 to 51; it reads MASQLNEAIFAARRRNDDDDTTRSSVFTYTNSNNTRGPFEGPNYHIAPRWV. N33 is a glycosylation site (N-linked (GlcNAc...) asparagine). The chain crosses the membrane as a helical span at residues 52–76; the sequence is YNLTSIWMIFVVFASVFTNGLVIVA. Topologically, residues 77–88 are cytoplasmic; the sequence is TLKFKKLRHPLN. The helical transmembrane segment at 89–113 threads the bilayer; that stretch reads WILVNMAIADLGETVIASTISVFNQ. Topologically, residues 114–128 are extracellular; the sequence is IFGYFILGHPMCVLE. The cysteines at positions 125 and 202 are disulfide-linked. The helical transmembrane segment at 129-148 threads the bilayer; sequence GFTVSTCGITALWSLTVIAW. At 149–167 the chain is on the cytoplasmic side; that stretch reads ERWFVVCKPFGNIKFDEKL. The chain crosses the membrane as a helical span at residues 168–191; the sequence is AATGIIFSWVWSAGWCAPPMFGWS. Topologically, residues 192 to 217 are extracellular; the sequence is RFWPHGLKTSCGPDVFSGSSDPGVQS. Residues 218–245 form a helical membrane-spanning segment; that stretch reads YMLVLMITCCIIPLAIIILCYLHVWWTI. At 246-267 the chain is on the cytoplasmic side; it reads RQVAQQQKESESTQKAEREVSR. A helical transmembrane segment spans residues 268-291; it reads MVVVMIVAYIFCWGPYTFFACFAA. At 292-299 the chain is on the extracellular side; the sequence is FSPGYSFH. A helical transmembrane segment spans residues 300-324; it reads PLAAALPAYFAKSATIYNPIIYVFM. K311 is subject to N6-(retinylidene)lysine. Topologically, residues 325–365 are cytoplasmic; it reads NRQFRNCIYQMFGKKVDDGSEVSSTSRTEVSSVSNSSVSPA. The tract at residues 342-365 is disordered; sequence DGSEVSSTSRTEVSSVSNSSVSPA. Low complexity predominate over residues 345 to 365; it reads EVSSTSRTEVSSVSNSSVSPA.

Belongs to the G-protein coupled receptor 1 family. Opsin subfamily. Phosphorylated on some or all of the serine and threonine residues present in the C-terminal region.

The protein localises to the membrane. Its function is as follows. Visual pigments are the light-absorbing molecules that mediate vision. They consist of an apoprotein, opsin, covalently linked to cis-retinal. The sequence is that of Red-sensitive opsin (opn1lw1) from Xenopus laevis (African clawed frog).